The sequence spans 91 residues: uncharacterized protein (91 aa).

The next 3 membrane-spanning stretches (helical) occupy residues 9–29 (LIHA…YTAG), 30–50 (LGIF…VIFG), and 67–87 (WLGC…VLKF).

The protein localises to the cell membrane. This is an uncharacterized protein from Methanocaldococcus jannaschii (strain ATCC 43067 / DSM 2661 / JAL-1 / JCM 10045 / NBRC 100440) (Methanococcus jannaschii).